A 542-amino-acid chain; its full sequence is uncharacterized protein (542 aa).

Over 1–78 the chain is Extracellular; it reads MSVQKEEYDI…EEKKLVRKMD (78 aa). A helical membrane pass occupies residues 79–99; the sequence is LKIFLWVFIMFAFLDLIRKNI. Topologically, residues 100-119 are cytoplasmic; that stretch reads ARAVSDNFIVDLKMNTNDYN. The helical transmembrane segment at 120 to 140 threads the bilayer; sequence LGQTVYLVIFLASELPGNLLS. The Extracellular segment spans residues 141-147; that stretch reads KRFGPER. The helical transmembrane segment at 148–168 threads the bilayer; it reads VIPVQIVLWSVICITQAGLKN. Over 169–176 the chain is Cytoplasmic; the sequence is RGQFIATR. The helical transmembrane segment at 177–197 threads the bilayer; it reads CLLGMVQGGFIPDNILYLSYY. Residues 198 to 208 are Extracellular-facing; sequence YTGAELTFRLS. The chain crosses the membrane as a helical span at residues 209 to 229; sequence FFWCAIPLFQILGSLLASGII. Topologically, residues 230–241 are cytoplasmic; the sequence is EMRGIHNLAGWQ. The helical transmembrane segment at 242–262 threads the bilayer; sequence YLFIIEGFLSLSVGVASFYLM. The Extracellular segment spans residues 263 to 326; sequence RRGPTQTGES…TLTEFDLWPL (64 aa). Residues 327–347 form a helical membrane-spanning segment; it reads FIQGITAFISLQTVGSYLSLI. At 348-359 the chain is on the cytoplasmic side; the sequence is LKSLNYSTFLSN. Residues 360–380 traverse the membrane as a helical segment; sequence ILAIPGQALLLINLPLAALLS. The Extracellular portion of the chain corresponds to 381–387; that stretch reads RKLKEKS. A helical transmembrane segment spans residues 388 to 408; it reads LCVGIANVWVLPFIVSLVALP. At 409–416 the chain is on the cytoplasmic side; sequence TDTNPWIK. A helical transmembrane segment spans residues 417–437; the sequence is YILLTGILGLPYTHSILAGWV. Residues 438-482 lie on the Extracellular side of the membrane; the sequence is SEISNSVRSRTVGTALYNMSAQVGAIIASNMYRNDDKPYYTRGNK. The helical transmembrane segment at 483–503 threads the bilayer; that stretch reads ILLGFTCFNICMAVATKFYYI. The Cytoplasmic segment spans residues 504 to 542; sequence SRNKYKDRKWNSMTKEEQINYLDTTKDKGMKRLDYRFIH.

Belongs to the major facilitator superfamily. Allantoate permease family.

It is found in the membrane. This is an uncharacterized protein from Saccharomyces cerevisiae (strain ATCC 204508 / S288c) (Baker's yeast).